The following is a 98-amino-acid chain: Small ribosomal subunit protein bS6 (98 aa).

The protein belongs to the bacterial ribosomal protein bS6 family.

In terms of biological role, binds together with bS18 to 16S ribosomal RNA. The polypeptide is Small ribosomal subunit protein bS6 (Staphylococcus aureus (strain NCTC 8325 / PS 47)).